The sequence spans 395 residues: MAVTDSLSRAASTLAAVLLLSFGSVAASHIEDQAEQFFRSGHTNNWAVLVCTSRFWFNYRHVANTLSVYRSVKRLGIPDSHIVLMLADDMACNPRNPKPATVFSHKNMELNVYGDDVEVDYRSYEVTVENFLRVLTGRIPPSTPRSKRLLSDDRSNILIYMTGHGGNGFLKFQDSEEITNIELADAFEQMWQKRRYNELLFIIDTCQGASMYERFYSPNIMALASSQVGEDSLSHQPDPAIGVHLMDRYTFYVLEFLEEINPASQTNMNDLFQVCPKSLCVSTPGHRTDLFQRDPKNVLITDFFGSVRKVEITTETIKLQQDSEIMESSYKEDQMDEELMEPLKYAEQLPVAQIIHQKPKLKDWHPPGGFILGLWALIIMVFFKTYGIKHMKFIF.

Residues 1-27 (MAVTDSLSRAASTLAAVLLLSFGSVAA) form the signal peptide. The Lumenal portion of the chain corresponds to 28 to 368 (SHIEDQAEQF…PKLKDWHPPG (341 aa)). Residues aspartate 79, isoleucine 82, glutamate 118, and aspartate 120 each contribute to the Ca(2+) site. Histidine 164 (proton donor) is an active-site residue. The active-site Nucleophile; acyl-thioester intermediate is the cysteine 206. Cysteine 206, serine 232, and serine 234 together coordinate a protein. Residues 231 to 236 (DSLSHQ) form an autoinhibitory loop region. Cysteine 275 and cysteine 280 are joined by a disulfide. A helical transmembrane segment spans residues 369 to 385 (GFILGLWALIIMVFFKT). Topologically, residues 386 to 395 (YGIKHMKFIF) are cytoplasmic.

This sequence belongs to the peptidase C13 family. In terms of assembly, heteropentamer. Part of the GPI-anchor transamidase complex, consisting of PIGK, PIGT, PIGS, PIGU and GAA1. Interacts with GPAA1. Interacts with PIGT; this interaction, via a disulfide link, stabilizes the expression of GAA1 and PIGK and links them to PIGS. The disulfide bond between PIGK/GPI8 and PIGT is important for normal enzyme activity.

The protein localises to the endoplasmic reticulum membrane. The protein operates within glycolipid biosynthesis; glycosylphosphatidylinositol-anchor biosynthesis. Its activity is regulated as follows. In the absence of proproteins substrates, exists in an inactive state with a disrupted catalytic site by an autoinhibitory loop. The binding of proprotein substrates, particularly the CSP region, to GPI-T triggers concerted conformational changes that alleviate the inhibition by the autoinhibitory loop. Meanwhile, proprotein residues near the omega- site induce the formation of a catalytic cleft for catalysis, following which the products are released and GPI-T reverts to the inactive state. Catalytic subunit of the glycosylphosphatidylinositol-anchor (GPI-anchor) transamidase (GPI-T) complex that catalyzes the formation of the linkage between a proprotein and a GPI-anchor and participates in GPI anchored protein biosynthesis. Recognizes diverse proproteins at a C-terminal signal peptide (CSP) region that lacks consensus sequence and replaces it with a GPI-anchor via a transamidation reaction. Transamidation catalysis reaction follows a two-phase mechanism. In the acyl-enzyme phase, the carbonyl group of the proproteins's omega-site undergoes a nucleophilic attack forming an enzyme-substrate thioester bond. Followed by a general acid catalysis that allows CSP releasing, regenerating the carbonyl, and forming the acyl-enzyme intermediate. In the GPI-anchor attachment phase, the amino group of the GPI-anchor's ethanolamine phosphate, the one on third mannose (EtNP3), mediates a nucleophilic attack on the carbonyl of the acyl-enzyme intermediate, replacing the CSP, allowing GPI-anchor attachment to the omega-residue, therefore forming the product and freeing the enzyme. The chain is GPI-anchor transamidase from Pongo abelii (Sumatran orangutan).